Consider the following 172-residue polypeptide: Melanocortin-2 receptor accessory protein (172 aa).

A helical transmembrane segment spans residues 38-58 (IVIAFWVSLAAFVVLLFLILL). 2 disordered regions span residues 105-130 (QAQA…SSST) and 152-172 (PLVR…QLQS).

This sequence belongs to the MRAP family. As to quaternary structure, homodimer and heterodimer. Forms antiparallel homodimers and heterodimers with MRAP2. Interacts with MC1R, MC2R, MC3R, MC4R and MC5R.

It localises to the cell membrane. The protein localises to the endoplasmic reticulum membrane. Functionally, modulator of melanocortin receptors (MC1R, MC2R, MC3R, MC4R and MC5R). Acts by increasing ligand-sensitivity of melanocortin receptors and enhancing generation of cAMP by the receptors. Required both for MC2R trafficking to the cell surface of adrenal cells and for signaling in response to corticotropin (ACTH). May be involved in the intracellular trafficking pathways in adipocyte cells. The polypeptide is Melanocortin-2 receptor accessory protein (MRAP) (Pan troglodytes (Chimpanzee)).